The following is a 233-amino-acid chain: Aspartate/glutamate leucyltransferase (233 aa).

The protein belongs to the R-transferase family. Bpt subfamily.

The protein resides in the cytoplasm. The enzyme catalyses N-terminal L-glutamyl-[protein] + L-leucyl-tRNA(Leu) = N-terminal L-leucyl-L-glutamyl-[protein] + tRNA(Leu) + H(+). It catalyses the reaction N-terminal L-aspartyl-[protein] + L-leucyl-tRNA(Leu) = N-terminal L-leucyl-L-aspartyl-[protein] + tRNA(Leu) + H(+). Functions in the N-end rule pathway of protein degradation where it conjugates Leu from its aminoacyl-tRNA to the N-termini of proteins containing an N-terminal aspartate or glutamate. This chain is Aspartate/glutamate leucyltransferase, found in Vibrio campbellii (strain ATCC BAA-1116).